The primary structure comprises 386 residues: Methylthioribose-1-phosphate isomerase (386 aa).

D258 functions as the Proton donor in the catalytic mechanism.

It belongs to the eIF-2B alpha/beta/delta subunits family. MtnA subfamily.

It is found in the cytoplasm. It localises to the nucleus. The enzyme catalyses 5-(methylsulfanyl)-alpha-D-ribose 1-phosphate = 5-(methylsulfanyl)-D-ribulose 1-phosphate. The protein operates within amino-acid biosynthesis; L-methionine biosynthesis via salvage pathway; L-methionine from S-methyl-5-thio-alpha-D-ribose 1-phosphate: step 1/6. Functionally, catalyzes the interconversion of methylthioribose-1-phosphate (MTR-1-P) into methylthioribulose-1-phosphate (MTRu-1-P). This is Methylthioribose-1-phosphate isomerase from Postia placenta (strain ATCC 44394 / Madison 698-R) (Brown rot fungus).